A 298-amino-acid polypeptide reads, in one-letter code: Protease HtpX homolog (298 aa).

2 consecutive transmembrane segments (helical) span residues 15-35 (YVMIGFAILVLFIGAAVGYVF) and 39-59 (AMAGIIMAAVIAAIYMAMMIA). Histidine 143 serves as a coordination point for Zn(2+). Residue glutamate 144 is part of the active site. A Zn(2+)-binding site is contributed by histidine 147. The next 2 membrane-spanning stretches (helical) occupy residues 158-178 (IALALSSAIAMLVNIGMRSFW) and 197-217 (IVMMIISIVLVILGPIATTIA). Glutamate 226 serves as a coordination point for Zn(2+).

It belongs to the peptidase M48B family. The cofactor is Zn(2+).

It localises to the cell membrane. This Pediococcus pentosaceus (strain ATCC 25745 / CCUG 21536 / LMG 10740 / 183-1w) protein is Protease HtpX homolog.